Here is a 1429-residue protein sequence, read N- to C-terminus: Inactive rhomboid protein 1 (1429 aa).

Disordered regions lie at residues 1-36, 560-579, and 740-766; these read MSSN…STRR, GNED…PDRP, and TSAL…QPGA. At 1–843 the chain is on the cytoplasmic side; that stretch reads MSSNGSDLGH…RPFFTYWINT (843 aa). Residues 22 to 33 show a composition bias toward low complexity; the sequence is SVHSSMRGSMSS. 2 stretches are compositionally biased toward polar residues: residues 564–573 and 740–763; these read AGQSNGTNGN and TSAL…SSHQ. Residues 844 to 864 form a helical membrane-spanning segment; the sequence is VQVVVLILSIICYGIAPIGIG. Residues 865–1099 lie on the Lumenal side of the membrane; it reads SEQKTGQVLV…PDQLYRLLTS (235 aa). The chain crosses the membrane as a helical span at residues 1100–1120; it reads LCMHAGILHLAITLIFQHLFL. At 1121-1131 the chain is on the cytoplasmic side; it reads ADLERLIGTVR. The helical transmembrane segment at 1132–1152 threads the bilayer; the sequence is TAIVYIMSGFAGNLTSAILVP. Topologically, residues 1153 to 1156 are lumenal; the sequence is HRPE. A helical transmembrane segment spans residues 1157 to 1177; sequence VGPSASLSGVVASLIALLVWM. Over 1178–1186 the chain is Cytoplasmic; it reads HWKYLHKPH. Residues 1187 to 1207 form a helical membrane-spanning segment; it reads IALFKLLLLCSVLVGIGTLPY. At 1208 to 1210 the chain is on the lumenal side; the sequence is QLN. Residues 1211–1231 traverse the membrane as a helical segment; that stretch reads FLGLLAGVICGCLLTMSLVPF. The Cytoplasmic segment spans residues 1232 to 1245; that stretch reads TTFSKYGRKKKINL. Residues 1246 to 1266 form a helical membrane-spanning segment; the sequence is IWTCVLFHVVVYTAMIVTFYI. The Lumenal portion of the chain corresponds to 1267 to 1429; that stretch reads HPSEFHSISF…INNNTEFNVL (163 aa).

This sequence belongs to the peptidase S54 family. As to expression, specifically expressed in the nervous system and in brain.

Its subcellular location is the endoplasmic reticulum membrane. In terms of biological role, rhomboid protease-like protein which has no protease activity but regulates the secretion of several ligands of the epidermal growth factor receptor. Indirectly activates the epidermal growth factor receptor signaling pathway and may thereby regulate sleep, cell survival, proliferation and migration. The chain is Inactive rhomboid protein 1 (rho-5) from Drosophila melanogaster (Fruit fly).